Here is a 397-residue protein sequence, read N- to C-terminus: Acetate kinase 2 (397 aa).

Residue Asn8 coordinates Mg(2+). An ATP-binding site is contributed by Lys15. Substrate is bound at residue Arg89. Asp146 (proton donor/acceptor) is an active-site residue. ATP is bound by residues 206-210 (HLGNG), 281-283 (DLR), and 329-333 (GIGEN). Glu382 contributes to the Mg(2+) binding site.

It belongs to the acetokinase family. As to quaternary structure, homodimer. The cofactor is Mg(2+). Requires Mn(2+) as cofactor.

The protein localises to the cytoplasm. The enzyme catalyses acetate + ATP = acetyl phosphate + ADP. It functions in the pathway metabolic intermediate biosynthesis; acetyl-CoA biosynthesis; acetyl-CoA from acetate: step 1/2. In terms of biological role, catalyzes the formation of acetyl phosphate from acetate and ATP. Can also catalyze the reverse reaction. This Listeria monocytogenes serotype 4b (strain F2365) protein is Acetate kinase 2.